The following is a 150-amino-acid chain: UPF0178 protein AHA_0543 (150 aa).

The protein belongs to the UPF0178 family.

This Aeromonas hydrophila subsp. hydrophila (strain ATCC 7966 / DSM 30187 / BCRC 13018 / CCUG 14551 / JCM 1027 / KCTC 2358 / NCIMB 9240 / NCTC 8049) protein is UPF0178 protein AHA_0543.